Reading from the N-terminus, the 228-residue chain is MIIITPITNDPTTALLRLMAWLSPVFPVGSFSYSHGLERAVHDGLVVDAAGLQDWLQWLVRRGSGWNDAVLCAESWRCAMKGEDLHEIAELAEALAGSRERHMETMLQGGAFLAAARSWPCEIFDRLPPDCAYPVAVGAVAGGHGVPLAQALAAFLQAFCINLLQASIRLSVTGQSGVTAIMAALEPVLGETAARAALSSMEDLGSATFIADIMAMKHETQHSRLFRS.

This sequence belongs to the UreF family. In terms of assembly, ureD, UreF and UreG form a complex that acts as a GTP-hydrolysis-dependent molecular chaperone, activating the urease apoprotein by helping to assemble the nickel containing metallocenter of UreC. The UreE protein probably delivers the nickel.

The protein localises to the cytoplasm. Its function is as follows. Required for maturation of urease via the functional incorporation of the urease nickel metallocenter. This chain is Urease accessory protein UreF 1, found in Brucella canis (strain ATCC 23365 / NCTC 10854 / RM-666).